The sequence spans 387 residues: MNFHEYQAKQLFAEYGIPVPAGRIASSADEAVTAAKSLGNGPWMVKAQIHAGGRGKAGGVKFCKTTDEVKQAAAAMLGTKMATYQSAGVALPVNLVLVTEAGEITKELYLSVLVDRGTRSITYIASSEGGVDIEHVAAETPEKIQTLNVDFVEGLQPYQGRDIGFHLGLEAKQVNQLSKIMISLYQLFNDKDLSLIELNPLAILSNGDLYALDGKINSDDNATFRHKELAAMRDKTQEDETEVLASENDLNYVTMDGNIGCMVNGAGLAMATMDVIKLNGGEPANFLDVGGGATKERVTTAFKLILSSNKVKAIFVNIFGGIVRCDMIAEGIIAAVKEVGVKVPVIVRLEGTNVDAGKQLLATSGLAIIPADDINDGAKKAVAAVTV.

The 236-residue stretch at 9–244 (KQLFAEYGIP…KTQEDETEVL (236 aa)) folds into the ATP-grasp domain. ATP contacts are provided by residues lysine 46, 53–55 (GRG), glycine 102, and glutamate 107. 2 residues coordinate Mg(2+): asparagine 199 and aspartate 213. Residues asparagine 264 and 321–323 (GIV) contribute to the substrate site.

It belongs to the succinate/malate CoA ligase beta subunit family. As to quaternary structure, heterotetramer of two alpha and two beta subunits. It depends on Mg(2+) as a cofactor.

It catalyses the reaction succinate + ATP + CoA = succinyl-CoA + ADP + phosphate. The catalysed reaction is GTP + succinate + CoA = succinyl-CoA + GDP + phosphate. It participates in carbohydrate metabolism; tricarboxylic acid cycle; succinate from succinyl-CoA (ligase route): step 1/1. Succinyl-CoA synthetase functions in the citric acid cycle (TCA), coupling the hydrolysis of succinyl-CoA to the synthesis of either ATP or GTP and thus represents the only step of substrate-level phosphorylation in the TCA. The beta subunit provides nucleotide specificity of the enzyme and binds the substrate succinate, while the binding sites for coenzyme A and phosphate are found in the alpha subunit. This is Succinate--CoA ligase [ADP-forming] subunit beta from Xylella fastidiosa (strain 9a5c).